The primary structure comprises 251 residues: ATP synthase subunit a, chloroplastic (251 aa).

A run of 6 helical transmembrane segments spans residues 3 to 23 (IVLLYYFVNMFISGIFQIANV), 38 to 58 (IHGQVLINSWIVILIIGFLSI), 99 to 119 (VPYIGTMFLFIFVSNWSGALI), 138 to 158 (INTTAGLAILTSLAYFYAGLN), 203 to 223 (LVVAVLVSLVPLIVPVPLIFL), and 224 to 244 (GLFTSGIQALIFATLSGSYIG).

This sequence belongs to the ATPase A chain family. In terms of assembly, F-type ATPases have 2 components, CF(1) - the catalytic core - and CF(0) - the membrane proton channel. CF(1) has five subunits: alpha(3), beta(3), gamma(1), delta(1), epsilon(1). CF(0) has four main subunits: a, b, b' and c.

The protein resides in the plastid. It is found in the chloroplast thylakoid membrane. Its function is as follows. Key component of the proton channel; it plays a direct role in the translocation of protons across the membrane. This is ATP synthase subunit a, chloroplastic from Euglena gracilis.